The chain runs to 366 residues: Alanine racemase (366 aa).

The Proton acceptor; specific for D-alanine role is filled by Lys40. Lys40 carries the N6-(pyridoxal phosphate)lysine modification. Residue Arg136 coordinates substrate. The active-site Proton acceptor; specific for L-alanine is the Tyr263. Residue Met310 coordinates substrate.

It belongs to the alanine racemase family. It depends on pyridoxal 5'-phosphate as a cofactor.

The catalysed reaction is L-alanine = D-alanine. It participates in amino-acid biosynthesis; D-alanine biosynthesis; D-alanine from L-alanine: step 1/1. Its function is as follows. Catalyzes the interconversion of L-alanine and D-alanine. May also act on other amino acids. The polypeptide is Alanine racemase (alr) (Streptococcus pyogenes serotype M6 (strain ATCC BAA-946 / MGAS10394)).